Reading from the N-terminus, the 444-residue chain is Adenylyltransferase and sulfurtransferase UBA4 (444 aa).

ATP contacts are provided by residues glycine 81, aspartate 102, serine 109–arginine 113, lysine 126, and aspartate 170–threonine 171. Residues cysteine 212 and cysteine 215 each contribute to the Zn(2+) site. Cysteine 229 functions as the Glycyl thioester intermediate; for adenylyltransferase activity in the catalytic mechanism. Cysteine 290 and cysteine 293 together coordinate Zn(2+). In terms of domain architecture, Rhodanese spans lysine 343 to proline 442. Cysteine 401 acts as the Cysteine persulfide intermediate; for sulfurtransferase activity in catalysis.

It in the N-terminal section; belongs to the HesA/MoeB/ThiF family. UBA4 subfamily. Zn(2+) is required as a cofactor.

The protein localises to the cytoplasm. Its subcellular location is the cytosol. It participates in tRNA modification; 5-methoxycarbonylmethyl-2-thiouridine-tRNA biosynthesis. Functionally, plays a central role in 2-thiolation of mcm(5)S(2)U at tRNA wobble positions of cytosolic tRNA(Lys), tRNA(Glu) and tRNA(Gln). Acts by mediating the C-terminal thiocarboxylation of sulfur carrier URM1. Its N-terminus first activates URM1 as acyl-adenylate (-COAMP), then the persulfide sulfur on the catalytic cysteine is transferred to URM1 to form thiocarboxylation (-COSH) of its C-terminus. The reaction probably involves hydrogen sulfide that is generated from the persulfide intermediate and that acts as a nucleophile towards URM1. Subsequently, a transient disulfide bond is formed. Does not use thiosulfate as sulfur donor; NFS1 probably acting as a sulfur donor for thiocarboxylation reactions. Prior mcm(5) tRNA modification by the elongator complex is required for 2-thiolation. May also be involved in protein urmylation. The chain is Adenylyltransferase and sulfurtransferase UBA4 from Kluyveromyces lactis (strain ATCC 8585 / CBS 2359 / DSM 70799 / NBRC 1267 / NRRL Y-1140 / WM37) (Yeast).